A 346-amino-acid polypeptide reads, in one-letter code: Protein RecA (346 aa).

67 to 74 contributes to the ATP binding site; the sequence is GPESSGKT.

Belongs to the RecA family.

The protein localises to the cytoplasm. Can catalyze the hydrolysis of ATP in the presence of single-stranded DNA, the ATP-dependent uptake of single-stranded DNA by duplex DNA, and the ATP-dependent hybridization of homologous single-stranded DNAs. It interacts with LexA causing its activation and leading to its autocatalytic cleavage. This is Protein RecA from Saccharopolyspora erythraea (strain ATCC 11635 / DSM 40517 / JCM 4748 / NBRC 13426 / NCIMB 8594 / NRRL 2338).